The chain runs to 414 residues: Gamma-glutamyl phosphate reductase (414 aa).

It belongs to the gamma-glutamyl phosphate reductase family.

The protein resides in the cytoplasm. The enzyme catalyses L-glutamate 5-semialdehyde + phosphate + NADP(+) = L-glutamyl 5-phosphate + NADPH + H(+). Its pathway is amino-acid biosynthesis; L-proline biosynthesis; L-glutamate 5-semialdehyde from L-glutamate: step 2/2. Functionally, catalyzes the NADPH-dependent reduction of L-glutamate 5-phosphate into L-glutamate 5-semialdehyde and phosphate. The product spontaneously undergoes cyclization to form 1-pyrroline-5-carboxylate. The chain is Gamma-glutamyl phosphate reductase from Xanthomonas campestris pv. campestris (strain B100).